Here is a 175-residue protein sequence, read N- to C-terminus: MDLRAFIRLVPDFPKPGILFRDITPLLRDPAGFRAAIEQLAAGTATMGSLDYVVGIESRGFILGAALAQHLGLGFVPVRKPGKLPPPVLSQSYSLEYGQDQLQLHAHALRPGDRVVIVDDVIATGGTAAATAQLVAQSGAEVGGFAFLIELAFLSGRKLLPPEIPTHVVMVDESN.

The protein belongs to the purine/pyrimidine phosphoribosyltransferase family. As to quaternary structure, homodimer.

The protein localises to the cytoplasm. It carries out the reaction AMP + diphosphate = 5-phospho-alpha-D-ribose 1-diphosphate + adenine. Its pathway is purine metabolism; AMP biosynthesis via salvage pathway; AMP from adenine: step 1/1. Functionally, catalyzes a salvage reaction resulting in the formation of AMP, that is energically less costly than de novo synthesis. The protein is Adenine phosphoribosyltransferase of Synechococcus sp. (strain JA-3-3Ab) (Cyanobacteria bacterium Yellowstone A-Prime).